The sequence spans 121 residues: MAVCIIDHDNIRGVIYFEPVHGKDKVIGLKSGTYSLIIHRYGDISQGCDSIGSPEIFIGNIFVNRYGVAYVYLDTDVNISTIIGKALSISKNDQRLACGVIGISYINEKIIHFLTINENGV.

An intrachain disulfide couples C48 to C98.

The protein belongs to the Cu-Zn superoxide dismutase family.

It is found in the host cytoplasm. Virion protein with no enzymatic activity. This Vaccinia virus (strain Ankara) (VACV) protein is Cu-Zn superoxide dismutase-like protein.